A 383-amino-acid chain; its full sequence is Probable 2-succinylbenzoate--CoA ligase (383 aa).

The protein belongs to the ATP-dependent AMP-binding enzyme family. MenE subfamily.

It carries out the reaction 2-succinylbenzoate + ATP + CoA = 2-succinylbenzoyl-CoA + AMP + diphosphate. Its pathway is quinol/quinone metabolism; 1,4-dihydroxy-2-naphthoate biosynthesis; 1,4-dihydroxy-2-naphthoate from chorismate: step 5/7. It participates in quinol/quinone metabolism; menaquinone biosynthesis. In terms of biological role, converts 2-succinylbenzoate (OSB) to 2-succinylbenzoyl-CoA (OSB-CoA). May be involved in the biosynthesis of menaquinone. This chain is Probable 2-succinylbenzoate--CoA ligase (menE), found in Mycobacterium tuberculosis (strain CDC 1551 / Oshkosh).